We begin with the raw amino-acid sequence, 197 residues long: NADH-quinone oxidoreductase subunit C (197 aa).

Belongs to the complex I 30 kDa subunit family. In terms of assembly, NDH-1 is composed of 14 different subunits. Subunits NuoB, C, D, E, F, and G constitute the peripheral sector of the complex.

The protein localises to the cell inner membrane. It catalyses the reaction a quinone + NADH + 5 H(+)(in) = a quinol + NAD(+) + 4 H(+)(out). NDH-1 shuttles electrons from NADH, via FMN and iron-sulfur (Fe-S) centers, to quinones in the respiratory chain. The immediate electron acceptor for the enzyme in this species is believed to be ubiquinone. Couples the redox reaction to proton translocation (for every two electrons transferred, four hydrogen ions are translocated across the cytoplasmic membrane), and thus conserves the redox energy in a proton gradient. This Neisseria meningitidis serogroup C (strain 053442) protein is NADH-quinone oxidoreductase subunit C.